Consider the following 381-residue polypeptide: tRNA-specific 2-thiouridylase MnmA (381 aa).

ATP contacts are provided by residues 26-33 (AMSGGVDS) and Leu-52. The active-site Nucleophile is Cys-120. A disulfide bridge connects residues Cys-120 and Cys-217. Gly-144 serves as a coordination point for ATP. The segment at 166–168 (RDQ) is interaction with tRNA. Catalysis depends on Cys-217, which acts as the Cysteine persulfide intermediate.

Belongs to the MnmA/TRMU family.

It localises to the cytoplasm. The catalysed reaction is S-sulfanyl-L-cysteinyl-[protein] + uridine(34) in tRNA + AH2 + ATP = 2-thiouridine(34) in tRNA + L-cysteinyl-[protein] + A + AMP + diphosphate + H(+). Functionally, catalyzes the 2-thiolation of uridine at the wobble position (U34) of tRNA, leading to the formation of s(2)U34. This is tRNA-specific 2-thiouridylase MnmA from Ruegeria sp. (strain TM1040) (Silicibacter sp.).